The chain runs to 365 residues: DNA replication and repair protein RecF (365 aa).

30-37 (GPNGSGKT) contacts ATP.

Belongs to the RecF family.

Its subcellular location is the cytoplasm. In terms of biological role, the RecF protein is involved in DNA metabolism; it is required for DNA replication and normal SOS inducibility. RecF binds preferentially to single-stranded, linear DNA. It also seems to bind ATP. In Azotobacter vinelandii (strain DJ / ATCC BAA-1303), this protein is DNA replication and repair protein RecF.